A 399-amino-acid polypeptide reads, in one-letter code: uncharacterized protein (399 aa).

Residues 254–335 (SRVSTGDTSP…FFRDSDDDGD (82 aa)) form a disordered region. Residues 255 to 264 (RVSTGDTSPY) show a composition bias toward polar residues. The span at 310–329 (RNAEMKKSHSANDSEEFFRD) shows a compositional bias: basic and acidic residues.

This is an uncharacterized protein from Xenopus laevis (African clawed frog).